A 329-amino-acid chain; its full sequence is Lipoyl synthase (329 aa).

Positions 72, 77, 83, 98, 102, 105, and 313 each coordinate [4Fe-4S] cluster. One can recognise a Radical SAM core domain in the interval 83–303 (CWSHGTATIM…QIGLKKGFFE (221 aa)).

This sequence belongs to the radical SAM superfamily. Lipoyl synthase family. [4Fe-4S] cluster serves as cofactor.

The protein resides in the cytoplasm. The enzyme catalyses [[Fe-S] cluster scaffold protein carrying a second [4Fe-4S](2+) cluster] + N(6)-octanoyl-L-lysyl-[protein] + 2 oxidized [2Fe-2S]-[ferredoxin] + 2 S-adenosyl-L-methionine + 4 H(+) = [[Fe-S] cluster scaffold protein] + N(6)-[(R)-dihydrolipoyl]-L-lysyl-[protein] + 4 Fe(3+) + 2 hydrogen sulfide + 2 5'-deoxyadenosine + 2 L-methionine + 2 reduced [2Fe-2S]-[ferredoxin]. Its pathway is protein modification; protein lipoylation via endogenous pathway; protein N(6)-(lipoyl)lysine from octanoyl-[acyl-carrier-protein]: step 2/2. Its function is as follows. Catalyzes the radical-mediated insertion of two sulfur atoms into the C-6 and C-8 positions of the octanoyl moiety bound to the lipoyl domains of lipoate-dependent enzymes, thereby converting the octanoylated domains into lipoylated derivatives. The polypeptide is Lipoyl synthase (Legionella pneumophila (strain Corby)).